The primary structure comprises 320 residues: Ribosome biogenesis protein BRX1 homolog 2 (320 aa).

The tract at residues 1–40 (MGRKRKHSETEAPAPVKKSDEPAPDRPKRTLLGWKDKSEG) is disordered. Residues 17–40 (KKSDEPAPDRPKRTLLGWKDKSEG) show a composition bias toward basic and acidic residues. In terms of domain architecture, Brix spans 57–260 (EKVLVTCSRR…PIKIFAGSFG (204 aa)). Residues 297–320 (RKKMHELSNPLEPDEFADMWKDDE) are disordered. The segment covering 308 to 320 (EPDEFADMWKDDE) has biased composition (acidic residues).

The protein belongs to the BRX1 family. As to expression, expressed in roots, rosette leaves, stems, flowers, siliques and seeds.

Its subcellular location is the nucleus. It is found in the nucleolus. Functionally, involved in pre-rRNA processing and required for biogenesis of the large (60S) ribosomal subunit. Required for proper development. In Arabidopsis thaliana (Mouse-ear cress), this protein is Ribosome biogenesis protein BRX1 homolog 2.